A 196-amino-acid polypeptide reads, in one-letter code: MAEKKEKVKPTEQQKARLENTYKDKVVPALMERFKYKNIMMVPRLTKISVNIGVGEAAAEPKLLETAIQELSQITGQKPQIRKARKAISNFKLREGQAIGCRVTMRKKYMYEFLERFVTLAVPRIRDFRGLSTTSFDGRGNYSVGVREQIIFPEIDIDKVPRIQGMDISFVTTAKTDEEAFALLSELGMPFRKKNN.

This sequence belongs to the universal ribosomal protein uL5 family. As to quaternary structure, part of the 50S ribosomal subunit; part of the 5S rRNA/L5/L18/L25 subcomplex. Contacts the 5S rRNA and the P site tRNA. Forms a bridge to the 30S subunit in the 70S ribosome.

This is one of the proteins that bind and probably mediate the attachment of the 5S RNA into the large ribosomal subunit, where it forms part of the central protuberance. In the 70S ribosome it contacts protein S13 of the 30S subunit (bridge B1b), connecting the 2 subunits; this bridge is implicated in subunit movement. Contacts the P site tRNA; the 5S rRNA and some of its associated proteins might help stabilize positioning of ribosome-bound tRNAs. In Chlorobium phaeobacteroides (strain BS1), this protein is Large ribosomal subunit protein uL5.